The following is a 135-amino-acid chain: Transcription antitermination protein NusB (135 aa).

This sequence belongs to the NusB family.

Its function is as follows. Involved in transcription antitermination. Required for transcription of ribosomal RNA (rRNA) genes. Binds specifically to the boxA antiterminator sequence of the ribosomal RNA (rrn) operons. The sequence is that of Transcription antitermination protein NusB from Wolinella succinogenes (strain ATCC 29543 / DSM 1740 / CCUG 13145 / JCM 31913 / LMG 7466 / NCTC 11488 / FDC 602W) (Vibrio succinogenes).